Reading from the N-terminus, the 342-residue chain is Cell division protein FtsQ (342 aa).

The Cytoplasmic segment spans residues 1 to 80 (MDGAGSLTRS…ALVERYLPRR (80 aa)). A helical membrane pass occupies residues 81-99 (VGISMTVLLLIGSCGFGIV). Residues 100–342 (KGGHLQDFVT…KKKKKAGDAA (243 aa)) are Periplasmic-facing. The POTRA domain maps to 124–192 (FRITSVVING…GQLMIELTER (69 aa)).

It belongs to the FtsQ/DivIB family. FtsQ subfamily.

It localises to the cell inner membrane. Its function is as follows. Essential cell division protein. In Bradyrhizobium diazoefficiens (strain JCM 10833 / BCRC 13528 / IAM 13628 / NBRC 14792 / USDA 110), this protein is Cell division protein FtsQ.